Here is a 116-residue protein sequence, read N- to C-terminus: Large ribosomal subunit protein bL17 (116 aa).

It belongs to the bacterial ribosomal protein bL17 family. Part of the 50S ribosomal subunit. Contacts protein L32.

The chain is Large ribosomal subunit protein bL17 from Chloroflexus aurantiacus (strain ATCC 29366 / DSM 635 / J-10-fl).